We begin with the raw amino-acid sequence, 485 residues long: NADH-quinone oxidoreductase subunit N (485 aa).

14 consecutive transmembrane segments (helical) span residues 8–28, 35–55, 71–91, 105–125, 127–147, 159–179, 203–223, 235–255, 271–291, 297–317, 326–346, 373–393, 408–430, and 455–475; these read LIALLPLLIVGLTVVVVMLSI, FLNATLSVIGLNAALVSLWFV, GFAMLYTGLVLLASLATCTFA, FYLLVLIAALGGILLANANHL, ALFLGIELISLPLFGLIGYAF, YTILSAAASSFLLFGMALVYA, LLAGFGLMIVGLGFKLSLVPF, PAPVSTFLATASKIAIFGVVM, IVLGVIAFASIIFGNLMALSQ, LLGYSSISHLGYLLVALIALQ, VGVYLAGYLFSSLGAFGVVSL, AAVMTVMMLSLAGIPMTLGFI, WWLVAAVVVGSAIGLYYYLRVAV, and IVVLISALLVLVLGIYPQPLI.

Belongs to the complex I subunit 2 family. As to quaternary structure, NDH-1 is composed of 13 different subunits. Subunits NuoA, H, J, K, L, M, N constitute the membrane sector of the complex.

Its subcellular location is the cell inner membrane. The enzyme catalyses a quinone + NADH + 5 H(+)(in) = a quinol + NAD(+) + 4 H(+)(out). Its function is as follows. NDH-1 shuttles electrons from NADH, via FMN and iron-sulfur (Fe-S) centers, to quinones in the respiratory chain. The immediate electron acceptor for the enzyme in this species is believed to be ubiquinone. Couples the redox reaction to proton translocation (for every two electrons transferred, four hydrogen ions are translocated across the cytoplasmic membrane), and thus conserves the redox energy in a proton gradient. The polypeptide is NADH-quinone oxidoreductase subunit N (Citrobacter koseri (strain ATCC BAA-895 / CDC 4225-83 / SGSC4696)).